The chain runs to 767 residues: MSHAVTIEEPQAQPQVSQTRYRERSRAGSHISSNRAYDFLYDPLFIVSSEKDHTQANIQATLIRSRLRKVPRFKTMFSNLIHYPRYSLYWSKSDPVPPFISREWKGHKEKHREALRQLTTTDASFQMPKEVYEDPEVTGKNRYKYFERPFLPFFQQMPFNVVYAVSKAEPYTFPPTSTKHLSIPSKSTVGTQTDYRDADVQTDPYSAEYVVCQDSIPELLTLATLTWGRGLPAGQAEVEMIERAREKRAWEASLPALSDTSQFEKRRKMMNEMERKEWAFREQEIEKLQEIRLEVLKELLRKREENQNEVNMKHLNARWSKLQEGKEAKMAKIQRTHVSTIRKLVGKRKNIEGKLERRNIIKDYSDYASQVYGPLSRLGCFPDNNSEDFVVKNYYLNTYEGLVELESCLPDFVTQPQIRAPKPKVITTKAGFLKRAARLDYELAEVHKALLDKKNKVLEVKKPPRFLQRNPIPQPRLPTPTLEMTSNEEEEMEMAVIYLQKLLRGRVVQNMMFEGKEKRLELIQELRTCHALQEDEKLVKKAEKQVTLALQRQRNLHEHKVSLVENHLAGLEGRALADMFDFLSKELVRLQEERRIHAFVMLAERQRRVREAEESGRRQVEKQRLREEDEIFKEVVKVHHSTISSYLEDIILNTEANTAEEQARAEIEKMAEKINDIAYEMESRRTYLQSEEIVAELVYSFLIPEVQKYFVKEKVRNAQRKHILAAHQIIHSYTESMVQKKLTEGEQDEASNAAMLLEKETQNENNS.

The tract at residues 1–29 (MSHAVTIEEPQAQPQVSQTRYRERSRAGS) is disordered.

Belongs to the CFAP91 family. In terms of assembly, interacts with MYCBP and AKAP1. Part of a complex containing MYCBP, AKAP1 and PRKAR2B. Interacts with CFAP61. Does not interact with MYCBP. Post-translationally, phosphorylated by PKA. Strongly expressed in the liver. In terms of tissue distribution, widely expressed, but strongly expressed in all spermatogenesis-related tissues, including the testis, the epithelium of cauda and the corpus epididymis, as well as the spermatid and mature sperm. Also expressed in Leydig cells.

The protein resides in the mitochondrion. The protein localises to the cytoplasm. It is found in the cytoskeleton. It localises to the cilium axoneme. In terms of biological role, involved in sperm flagellum axonemal organization and function. May regulate cilium motility through its role in the assembly of the axonemal radial spokes. The polypeptide is Cilia- and flagella-associated protein 91 (Homo sapiens (Human)).